A 1680-amino-acid chain; its full sequence is Alpha-protein kinase 3 (1680 aa).

The interval 1-37 (MGSRRAAGRGWGLGGRAGAGGDSEDDGPVWTPGPASR) is disordered. Over residues 9-21 (RGWGLGGRAGAGG) the composition is skewed to gly residues. An Ig-like 1 domain is found at 77 to 173 (PLFETTLKSR…SGVLEVGTMT (97 aa)). The residue at position 229 (Ser-229) is a Phosphoserine. Disordered stretches follow at residues 237-288 (STPV…NGED), 302-759 (ELGP…CPRE), 785-950 (SEEA…GTRS), 1078-1128 (EGSA…LTGL), and 1147-1244 (PKVR…QRKA). Residues 320 to 337 (KDEESKPGEQKLELEKAE) are compositionally biased toward basic and acidic residues. The span at 339–353 (SQCSSENVVPSTDKP) shows a compositional bias: polar residues. The segment covering 402-426 (APAPAPVPAPALAPAPVPVPAPTPV) has biased composition (pro residues). Over residues 514–532 (ESTTTSLSSQTSESMAQSL) the composition is skewed to low complexity. Polar residues-rich tracts occupy residues 557–566 (SPLQGQTSHK) and 731–744 (ETQSEQLSMASLSS). Over residues 785–796 (SEEAAFRSHEDG) the composition is skewed to basic and acidic residues. Polar residues predominate over residues 917-932 (SPTQSHPPEAMATSSE). 2 stretches are compositionally biased toward basic and acidic residues: residues 1087–1111 (ERTSQESDKKGLLGEVEGHTVESRT) and 1151–1165 (AGSDGEANKAEERES). Residue Ser-1199 is modified to Phosphoserine. Residues 1231–1244 (DEGKQEALAKQRKA) are compositionally biased toward basic and acidic residues. The 89-residue stretch at 1251-1339 (PQVIRKIRVE…GSASTDFCLS (89 aa)) folds into the Ig-like 2 domain. Cys-1273 and Cys-1323 are disulfide-bonded. The 234-residue stretch at 1367-1600 (KGLADSGCWG…YCDMLGLKPL (234 aa)) folds into the Alpha-type protein kinase domain. The segment at 1603–1680 (PEAAHPQAKA…DGSSKAQSMR (78 aa)) is disordered. 2 stretches are compositionally biased toward polar residues: residues 1639-1660 (PQGSRKSAPSSRATLQASQAAT) and 1671-1680 (DGSSKAQSMR).

This sequence belongs to the protein kinase superfamily. Alpha-type protein kinase family. ALPK subfamily. In terms of tissue distribution, expressed in the heart and skeletal muscle of adult mice.

It is found in the nucleus. It catalyses the reaction L-seryl-[protein] + ATP = O-phospho-L-seryl-[protein] + ADP + H(+). The catalysed reaction is L-threonyl-[protein] + ATP = O-phospho-L-threonyl-[protein] + ADP + H(+). Functionally, involved in cardiomyocyte differentiation. The protein is Alpha-protein kinase 3 of Mus musculus (Mouse).